Reading from the N-terminus, the 734-residue chain is Transcription factor EMB1444 (734 aa).

The tract at residues 537-566 (QFPTSLEIPKKNKKRAKPGESSRPRPRDRQ) is disordered. Positions 548-555 (NKKRAKPG) match the Nuclear localization signal motif. Residues 552 to 601 (AKPGESSRPRPRDRQLIQDRIKELRELVPNGSKCSIDSLLECTIKHMLFL) enclose the bHLH domain. Over residues 553–566 (KPGESSRPRPRDRQ) the composition is skewed to basic and acidic residues.

The protein belongs to the bHLH protein family. LHW subfamily. As to quaternary structure, homodimer.

It localises to the nucleus. In terms of biological role, transcription factor that may regulate root development. In Arabidopsis thaliana (Mouse-ear cress), this protein is Transcription factor EMB1444.